Reading from the N-terminus, the 398-residue chain is MALKLNPLASQPYNFPSSARPPISTFRSPKFLCLASSSPALSSKEVESLKKPFTPPKEVHVQVLHSMPPQKIEIFKSMEDWAEQNLLTQLKDVEKSWQPQDFLPDPASDGFEDQVRELRERARELPDDYFVVLVGDMITEEALPTYQTMLNTLDGVRDETGASPTSWAIWTRAWTAEENRHGDLLNKYLYLSGRVDMRQIEKTIQYLIGSGMDPRTENNPYLGFIYTSFQERATFISHGNTARQAKEHGDLKLAQICGTIAADEKRHETAYTKIVEKLFEIDPDGTVMAFADMMRKKISMPAHLMYDGRDESLFDNFSSVAQRLGVYTAKDYADILEFLVGRWKIESLTGLSGEGNKAQEYLCGLTPRIRRLDERAQARAKKGPKVPFSWIHDREVQL.

The transit peptide at 1 to 34 (MALKLNPLASQPYNFPSSARPPISTFRSPKFLCL) directs the protein to the chloroplast. Residues Glu-140, Glu-178, His-181, Glu-231, Glu-264, and His-267 each contribute to the Fe cation site.

This sequence belongs to the fatty acid desaturase type 2 family. In terms of assembly, homodimer. Fe(2+) is required as a cofactor.

Its subcellular location is the plastid. The protein resides in the chloroplast. The enzyme catalyses octadecanoyl-[ACP] + 2 reduced [2Fe-2S]-[ferredoxin] + O2 + 2 H(+) = (9Z)-octadecenoyl-[ACP] + 2 oxidized [2Fe-2S]-[ferredoxin] + 2 H2O. It participates in lipid metabolism; fatty acid metabolism. Its function is as follows. Converts stearoyl-ACP to oleoyl-ACP by introduction of a cis double bond between carbons 9 and 10 of the acyl chain. The chain is Stearoyl-[acyl-carrier-protein] 9-desaturase, chloroplastic from Brassica napus (Rape).